The following is a 246-amino-acid chain: Bis(5'-nucleosyl)-tetraphosphatase PrpE [asymmetrical] (246 aa).

The protein belongs to the PrpE family. Ni(2+) serves as cofactor.

The enzyme catalyses P(1),P(4)-bis(5'-guanosyl) tetraphosphate + H2O = GMP + GTP + 2 H(+). Asymmetrically hydrolyzes Ap4p to yield AMP and ATP. This Bacillus mycoides (strain KBAB4) (Bacillus weihenstephanensis) protein is Bis(5'-nucleosyl)-tetraphosphatase PrpE [asymmetrical].